A 287-amino-acid polypeptide reads, in one-letter code: Flagellin (287 aa).

This sequence belongs to the bacterial flagellin family.

The protein localises to the secreted. It is found in the bacterial flagellum. Functionally, flagellin is the subunit protein which polymerizes to form the filaments of bacterial flagella. This chain is Flagellin (flaA), found in Listeria monocytogenes serovar 1/2a (strain ATCC BAA-679 / EGD-e).